A 141-amino-acid chain; its full sequence is MAIILGADAHGNALKELIKSFLQEEGYDIIDVTDINSDFIDNTLAVAKAVNEAEGRLGIMVDAYGAGPFMVATKLKGMVAAEVSDERSAYMTRGHNNARMITIGAEIVGPELAKNIVKGFVTGPYDGGRHQIRVDMLNKMA.

The protein belongs to the LacAB/RpiB family. Heteromultimeric protein consisting of LacA and LacB.

It carries out the reaction aldehydo-D-galactose 6-phosphate = keto-D-tagatose 6-phosphate. The protein operates within carbohydrate metabolism; D-galactose 6-phosphate degradation; D-tagatose 6-phosphate from D-galactose 6-phosphate: step 1/1. The polypeptide is Galactose-6-phosphate isomerase subunit LacA 1 (Streptococcus pyogenes serotype M1).